A 528-amino-acid chain; its full sequence is Tubulin-specific chaperone E (528 aa).

A CAP-Gly domain is found at 27–71; it reads GLVPPVAGLWLGVEWDNPERGKHDGSHEGTVYFKCRHPTAGSFIR. 7 LRR repeats span residues 152-176, 178-206, 207-229, 231-253, 254-274, 279-300, and 309-330; these read CPNIRSIDLSKNLLSSWEEVIDIAD, LKHLEVLNLSENKLTSPSSSPSPTGTFPT, LKVLVLNRTGVTWAEVLRCASGW, VLEKLYLESNNIIISERPTDVLQ, TVKLLDLSSNQLIDENQLFLI, RLEQLILSDIGISSIHFPDAGI, and SLQYLVLNDNQIAQWSFMNELD. In terms of domain architecture, LRRCT spans 343 to 385; it reads NPLTEGSKDAQTTRQFIIARIGQLRTLNKCAIEPEERRGAELD. Lys464 bears the N6-acetyllysine mark. A Phosphoserine modification is found at Ser496.

Belongs to the TBCE family. As to quaternary structure, supercomplex made of cofactors A to E. Cofactors A and D function by capturing and stabilizing tubulin in a quasi-native conformation. Cofactor E binds to the cofactor D-tubulin complex; interaction with cofactor C then causes the release of tubulin polypeptides that are committed to the native state. Cofactors B and E can form a heterodimer which binds to alpha-tubulin and enhances their ability to dissociate tubulin heterodimers. Interacts with TBCD.

It is found in the cytoplasm. Its subcellular location is the cytoskeleton. Functionally, tubulin-folding protein; involved in the second step of the tubulin folding pathway and in the regulation of tubulin heterodimer dissociation. Required for correct organization of microtubule cytoskeleton and mitotic splindle, and maintenance of the neuronal microtubule network. The polypeptide is Tubulin-specific chaperone E (TBCE) (Bos taurus (Bovine)).